Here is a 429-residue protein sequence, read N- to C-terminus: Serine--tRNA ligase (429 aa).

Residue 235–237 (TAE) participates in L-serine binding. 266-268 (RSE) serves as a coordination point for ATP. Glutamate 289 is an L-serine binding site. 353–356 (EISS) contacts ATP. An L-serine-binding site is contributed by serine 389.

Belongs to the class-II aminoacyl-tRNA synthetase family. Type-1 seryl-tRNA synthetase subfamily. Homodimer. The tRNA molecule binds across the dimer.

It is found in the cytoplasm. It catalyses the reaction tRNA(Ser) + L-serine + ATP = L-seryl-tRNA(Ser) + AMP + diphosphate + H(+). The enzyme catalyses tRNA(Sec) + L-serine + ATP = L-seryl-tRNA(Sec) + AMP + diphosphate + H(+). The protein operates within aminoacyl-tRNA biosynthesis; selenocysteinyl-tRNA(Sec) biosynthesis; L-seryl-tRNA(Sec) from L-serine and tRNA(Sec): step 1/1. In terms of biological role, catalyzes the attachment of serine to tRNA(Ser). Is also able to aminoacylate tRNA(Sec) with serine, to form the misacylated tRNA L-seryl-tRNA(Sec), which will be further converted into selenocysteinyl-tRNA(Sec). This Histophilus somni (strain 129Pt) (Haemophilus somnus) protein is Serine--tRNA ligase.